Here is a 112-residue protein sequence, read N- to C-terminus: Putative pterin-4-alpha-carbinolamine dehydratase (112 aa).

The interval 1-30 (MSDELQSRTCTPCRGDVPPMTKAEAKRQLA) is disordered.

This sequence belongs to the pterin-4-alpha-carbinolamine dehydratase family.

The enzyme catalyses (4aS,6R)-4a-hydroxy-L-erythro-5,6,7,8-tetrahydrobiopterin = (6R)-L-erythro-6,7-dihydrobiopterin + H2O. The polypeptide is Putative pterin-4-alpha-carbinolamine dehydratase (Aromatoleum aromaticum (strain DSM 19018 / LMG 30748 / EbN1) (Azoarcus sp. (strain EbN1))).